Reading from the N-terminus, the 221-residue chain is Phosphoribosylformylglycinamidine synthase subunit PurQ (221 aa).

Residues 8 to 221 (NVGIIRFPGT…GLKFFKSFLD (214 aa)) form the Glutamine amidotransferase type-1 domain. Catalysis depends on C91, which acts as the Nucleophile. Active-site residues include H198 and E200.

Part of the FGAM synthase complex composed of 1 PurL, 1 PurQ and 2 PurS subunits.

Its subcellular location is the cytoplasm. The enzyme catalyses N(2)-formyl-N(1)-(5-phospho-beta-D-ribosyl)glycinamide + L-glutamine + ATP + H2O = 2-formamido-N(1)-(5-O-phospho-beta-D-ribosyl)acetamidine + L-glutamate + ADP + phosphate + H(+). The catalysed reaction is L-glutamine + H2O = L-glutamate + NH4(+). Its pathway is purine metabolism; IMP biosynthesis via de novo pathway; 5-amino-1-(5-phospho-D-ribosyl)imidazole from N(2)-formyl-N(1)-(5-phospho-D-ribosyl)glycinamide: step 1/2. Its function is as follows. Part of the phosphoribosylformylglycinamidine synthase complex involved in the purines biosynthetic pathway. Catalyzes the ATP-dependent conversion of formylglycinamide ribonucleotide (FGAR) and glutamine to yield formylglycinamidine ribonucleotide (FGAM) and glutamate. The FGAM synthase complex is composed of three subunits. PurQ produces an ammonia molecule by converting glutamine to glutamate. PurL transfers the ammonia molecule to FGAR to form FGAM in an ATP-dependent manner. PurS interacts with PurQ and PurL and is thought to assist in the transfer of the ammonia molecule from PurQ to PurL. This is Phosphoribosylformylglycinamidine synthase subunit PurQ from Methanosphaera stadtmanae (strain ATCC 43021 / DSM 3091 / JCM 11832 / MCB-3).